The following is a 452-amino-acid chain: MQRRIMGIETEFGITCTFHGQRRLSPDEVARYLFRRVVSWGRSSNVFLRNGSRLYLDVGSHPEYATAECDELPVLIAHDKAGERILQDLVVDAETRLAEEGIGGDIYLFKNNTDSAGNSYGCHENFLIARGGEFAKIADGLIPFLVTRQLIAGAGKVLQSPRGASYCLSQRADHIWEGVSSATTRSRPIINTRDEPHADAERYRRLHVIVGDSNMSETTTLLKVGTAALVLEMIESGVPMRDFTFENPIRAIREISHDTTGRKAVRLAGGGDISALDAQTEYYEKAAAFVANRGTDPVTHQVLDLWRRTLEAVQTQDFTKVDTEIDWIIKKKLIDAYAAKHGLDLTHPRIAQLDLTYHDVRPGRGLHSLLAARGRAARVVTDGQITTAMTVPPQTTRARLRGEFVAAAQDAGRDYTVDWVHLKLNDQAQRTVLLKDPFRSTDDRVTKLIEAM.

E9 is a Mg(2+) binding site. Residue R53 coordinates ATP. A Mg(2+)-binding site is contributed by Y55. The active-site Proton acceptor is D57. E63 contributes to the Mg(2+) binding site. ATP contacts are provided by T66 and W419.

The protein belongs to the Pup ligase/Pup deamidase family. Pup-conjugating enzyme subfamily.

The enzyme catalyses ATP + [prokaryotic ubiquitin-like protein]-L-glutamate + [protein]-L-lysine = ADP + phosphate + N(6)-([prokaryotic ubiquitin-like protein]-gamma-L-glutamyl)-[protein]-L-lysine.. It functions in the pathway protein degradation; proteasomal Pup-dependent pathway. Its pathway is protein modification; protein pupylation. In terms of biological role, catalyzes the covalent attachment of the prokaryotic ubiquitin-like protein modifier Pup to the proteasomal substrate proteins, thereby targeting them for proteasomal degradation. This tagging system is termed pupylation. The ligation reaction involves the side-chain carboxylate of the C-terminal glutamate of Pup and the side-chain amino group of a substrate lysine. The sequence is that of Pup--protein ligase from Nakamurella multipartita (strain ATCC 700099 / DSM 44233 / CIP 104796 / JCM 9543 / NBRC 105858 / Y-104) (Microsphaera multipartita).